Reading from the N-terminus, the 384-residue chain is Nodal homolog 2-B (384 aa).

Positions 1–18 (MASLGAILLFAIASLMHG) are cleaved as a signal peptide. The propeptide occupies 19–283 (RPIHSDRKGA…RVADARRHRR (265 aa)). N-linked (GlcNAc...) asparagine glycosylation is found at Asn-71, Asn-173, and Asn-344. Cys-306 and Cys-372 are joined by a disulfide.

The protein belongs to the TGF-beta family. Homodimer; disulfide-linked. Forms heterodimers with the TGF-beta family member derriere. Interacts with tsku; enhances nodal2 activity.

It localises to the secreted. Its function is as follows. Cooperation and regulatory loops of multiple nodals are essential for mesendoderm patterning in early embryos. Essential for mesoderm formation and axial patterning during embryonic development. Activates the activin-like signaling pathway to induce dorsal and ventral mesoderm in animal cap ectoderm. In addition, also dorsalizes ventral marginal zone (VMZ) tissues during gastrulation. Induces muscle actin. Appears to act as both a short-range and long-range morphogen. The unprocessed protein inhibits bmp- and wnt-signaling. This is Nodal homolog 2-B (nodal2-b) from Xenopus laevis (African clawed frog).